The following is a 433-amino-acid chain: Divergent protein kinase domain 2B (433 aa).

A signal peptide spans 1–29 (MEPRLGPKAAALHLGWPFLLLWVSGLSYS). N-linked (GlcNAc...) asparagine glycosylation is present at asparagine 100.

This sequence belongs to the DIPK family.

It localises to the secreted. This chain is Divergent protein kinase domain 2B (DIPK2B), found in Bos taurus (Bovine).